Reading from the N-terminus, the 62-residue chain is Photosystem II reaction center protein Z (62 aa).

A run of 2 helical transmembrane segments spans residues 8–28 and 41–61; these read AVFA…VVFA and FSGT…NSLI.

It belongs to the PsbZ family. PSII is composed of 1 copy each of membrane proteins PsbA, PsbB, PsbC, PsbD, PsbE, PsbF, PsbH, PsbI, PsbJ, PsbK, PsbL, PsbM, PsbT, PsbY, PsbZ, Psb30/Ycf12, at least 3 peripheral proteins of the oxygen-evolving complex and a large number of cofactors. It forms dimeric complexes.

It is found in the plastid. Its subcellular location is the chloroplast thylakoid membrane. In terms of biological role, may control the interaction of photosystem II (PSII) cores with the light-harvesting antenna, regulates electron flow through the 2 photosystem reaction centers. PSII is a light-driven water plastoquinone oxidoreductase, using light energy to abstract electrons from H(2)O, generating a proton gradient subsequently used for ATP formation. This chain is Photosystem II reaction center protein Z, found in Gossypium barbadense (Sea Island cotton).